The sequence spans 148 residues: Transthyretin-like protein 2 (148 aa).

The N-terminal stretch at 1–17 is a signal peptide; it reads MSKYAILGLVLVGTVAS. Asn-77 carries an N-linked (GlcNAc...) asparagine glycan.

Belongs to the nematode transthyretin-like family.

It localises to the secreted. In Caenorhabditis elegans, this protein is Transthyretin-like protein 2 (ttr-2).